Consider the following 251-residue polypeptide: Protein CMS1 (251 aa).

The interval 1 to 37 is disordered; it reads MSLDNDINTKKRKLQDDEKPRKKRKHKRPTRDDDADL.

It belongs to the CMS1 family.

It is found in the nucleus. May play a role in the regulation of DNA replication and cell cycle control. The sequence is that of Protein CMS1 (CSM1) from Chaetomium thermophilum (strain DSM 1495 / CBS 144.50 / IMI 039719) (Thermochaetoides thermophila).